We begin with the raw amino-acid sequence, 152 residues long: Deoxyuridine 5'-triphosphate nucleotidohydrolase (152 aa).

Residues 71 to 73, asparagine 84, 88 to 90, and methionine 98 contribute to the substrate site; these read RSG and LID.

It belongs to the dUTPase family. Mg(2+) serves as cofactor.

The catalysed reaction is dUTP + H2O = dUMP + diphosphate + H(+). It functions in the pathway pyrimidine metabolism; dUMP biosynthesis; dUMP from dCTP (dUTP route): step 2/2. Its function is as follows. This enzyme is involved in nucleotide metabolism: it produces dUMP, the immediate precursor of thymidine nucleotides and it decreases the intracellular concentration of dUTP so that uracil cannot be incorporated into DNA. The polypeptide is Deoxyuridine 5'-triphosphate nucleotidohydrolase (Shewanella sp. (strain MR-7)).